A 452-amino-acid polypeptide reads, in one-letter code: Lysine-rich nucleolar protein 1 (452 aa).

Disordered regions lie at residues 1–28 (MITK…VKEP), 55–161 (VIQE…AFSG), and 184–305 (REQA…PDTD). Residue Lys7 forms a Glycyl lysine isopeptide (Lys-Gly) (interchain with G-Cter in SUMO2) linkage. Residues 65-75 (LVKKKKKKKGH) show a composition bias toward basic residues. Residues 78 to 98 (ICEEHLEPEITLRAGRTERSH) show a composition bias toward basic and acidic residues. Phosphoserine is present on Ser112. Lys126 participates in a covalent cross-link: Glycyl lysine isopeptide (Lys-Gly) (interchain with G-Cter in SUMO2). Positions 127–139 (TSPDPRQDEEVTR) are enriched in basic and acidic residues. Ser128 bears the Phosphoserine mark. Composition is skewed to basic residues over residues 140-151 (VGKKLKKHKKEK) and 258-267 (SVKKKVKSKK). Ser258 carries the phosphoserine modification. Lys280 participates in a covalent cross-link: Glycyl lysine isopeptide (Lys-Gly) (interchain with G-Cter in SUMO2). The segment covering 293 to 305 (VAEEPWEEEPDTD) has biased composition (acidic residues). The interval 300-452 (EEPDTDLEVV…NASKSIKFED (153 aa)) is interaction with ZNF106. Thr304 is modified (phosphothreonine). Glycyl lysine isopeptide (Lys-Gly) (interchain with G-Cter in SUMO2) cross-links involve residues Lys313, Lys347, Lys367, Lys369, and Lys401. Arg424 is modified (omega-N-methylarginine). Lys436 participates in a covalent cross-link: Glycyl lysine isopeptide (Lys-Gly) (interchain with G-Cter in SUMO2).

In terms of assembly, interacts with ZNF106.

It is found in the nucleus. The protein localises to the nucleolus. The polypeptide is Lysine-rich nucleolar protein 1 (KNOP1) (Bos taurus (Bovine)).